A 288-amino-acid chain; its full sequence is Glycine--tRNA ligase alpha subunit (288 aa).

This sequence belongs to the class-II aminoacyl-tRNA synthetase family. In terms of assembly, tetramer of two alpha and two beta subunits.

It localises to the cytoplasm. It carries out the reaction tRNA(Gly) + glycine + ATP = glycyl-tRNA(Gly) + AMP + diphosphate. This is Glycine--tRNA ligase alpha subunit from Rickettsia peacockii (strain Rustic).